The following is a 762-amino-acid chain: Anhydrosialidase (762 aa).

The first 27 residues, 1–27, serve as a signal peptide directing secretion; sequence MGRIGKKAMAIALVSAVMVTPLNVCAT. Residue arginine 293 participates in substrate binding. Catalysis depends on aspartate 318, which acts as the Proton acceptor. 3 BNR repeats span residues 328 to 339, 511 to 522, and 571 to 582; these read AKSTDGGNTWSE, RYSDDEGASWSD, and MYSDDHGDNWTY. Glutamate 595 is a catalytic residue. Residue arginine 611 coordinates substrate. Residues 620–631 form a BNR 4 repeat; the sequence is VTSIDGGETWSD. Arginine 673 is a substrate binding site. The active-site Nucleophile is the tyrosine 713.

This sequence belongs to the glycosyl hydrolase 33 family.

The protein resides in the secreted. The protein localises to the extracellular space. The enzyme catalyses Elimination of alpha-sialyl groups in N-acetylneuraminic acid glycosides, releasing 2,7-anhydro-alpha-N-acetylneuraminate.. This is Anhydrosialidase from Macrobdella decora (North American leech).